The chain runs to 430 residues: Serine--tRNA ligase (430 aa).

An L-serine-binding site is contributed by 235–237 (TSE). ATP is bound at residue 266–268 (RSE). Residue Glu289 coordinates L-serine. An ATP-binding site is contributed by 353–356 (EISS). Ser388 provides a ligand contact to L-serine.

This sequence belongs to the class-II aminoacyl-tRNA synthetase family. Type-1 seryl-tRNA synthetase subfamily. Homodimer. The tRNA molecule binds across the dimer.

Its subcellular location is the cytoplasm. The catalysed reaction is tRNA(Ser) + L-serine + ATP = L-seryl-tRNA(Ser) + AMP + diphosphate + H(+). The enzyme catalyses tRNA(Sec) + L-serine + ATP = L-seryl-tRNA(Sec) + AMP + diphosphate + H(+). The protein operates within aminoacyl-tRNA biosynthesis; selenocysteinyl-tRNA(Sec) biosynthesis; L-seryl-tRNA(Sec) from L-serine and tRNA(Sec): step 1/1. In terms of biological role, catalyzes the attachment of serine to tRNA(Ser). Is also able to aminoacylate tRNA(Sec) with serine, to form the misacylated tRNA L-seryl-tRNA(Sec), which will be further converted into selenocysteinyl-tRNA(Sec). In Azoarcus sp. (strain BH72), this protein is Serine--tRNA ligase.